The primary structure comprises 131 residues: Small ribosomal subunit protein uS8 (131 aa).

The protein belongs to the universal ribosomal protein uS8 family. Part of the 30S ribosomal subunit. Contacts proteins S5 and S12.

In terms of biological role, one of the primary rRNA binding proteins, it binds directly to 16S rRNA central domain where it helps coordinate assembly of the platform of the 30S subunit. This Novosphingobium aromaticivorans (strain ATCC 700278 / DSM 12444 / CCUG 56034 / CIP 105152 / NBRC 16084 / F199) protein is Small ribosomal subunit protein uS8.